The chain runs to 448 residues: Methionine aminopeptidase 2 (448 aa).

Low complexity predominate over residues 1–17; the sequence is MPATAEAADAATQATDA. The disordered stretch occupies residues 1 to 87; that stretch reads MPATAEAADA…QTEPPSIGLT (87 aa). The span at 21–34 shows a compositional bias: basic and acidic residues; sequence KLEENKLPEGQERG. The span at 35-46 shows a compositional bias: acidic residues; it reads PEEEEDDDDDET. Over residues 55–71 the composition is skewed to basic residues; that stretch reads KKKKKKKSGAKKKKSKT. His-200 contributes to the substrate binding site. 3 residues coordinate a divalent metal cation: Asp-220, Asp-231, and His-300. His-308 serves as a coordination point for substrate. A divalent metal cation contacts are provided by Glu-334 and Glu-429.

It belongs to the peptidase M24A family. Methionine aminopeptidase eukaryotic type 2 subfamily. Requires Co(2+) as cofactor. It depends on Zn(2+) as a cofactor. Mn(2+) serves as cofactor. The cofactor is Fe(2+).

The protein localises to the cytoplasm. The catalysed reaction is Release of N-terminal amino acids, preferentially methionine, from peptides and arylamides.. In terms of biological role, cotranslationally removes the N-terminal methionine from nascent proteins. The N-terminal methionine is often cleaved when the second residue in the primary sequence is small and uncharged (Met-Ala-, Cys, Gly, Pro, Ser, Thr, or Val). The polypeptide is Methionine aminopeptidase 2 (Malassezia globosa (strain ATCC MYA-4612 / CBS 7966) (Dandruff-associated fungus)).